The following is an 81-amino-acid chain: Neuronatin (81 aa).

Belongs to the neuronatin family.

Functionally, may participate in the maintenance of segment identity in the hindbrain and pituitary development, and maturation or maintenance of the overall structure of the nervous system. May function as a regulatory subunit of ion channels. This is Neuronatin (NNAT) from Mesocricetus auratus (Golden hamster).